Reading from the N-terminus, the 152-residue chain is Deoxyuridine 5'-triphosphate nucleotidohydrolase (152 aa).

Residues 72–74, asparagine 85, and 89–91 contribute to the substrate site; these read RSG and TID.

This sequence belongs to the dUTPase family. The cofactor is Mg(2+).

The catalysed reaction is dUTP + H2O = dUMP + diphosphate + H(+). It functions in the pathway pyrimidine metabolism; dUMP biosynthesis; dUMP from dCTP (dUTP route): step 2/2. This enzyme is involved in nucleotide metabolism: it produces dUMP, the immediate precursor of thymidine nucleotides and it decreases the intracellular concentration of dUTP so that uracil cannot be incorporated into DNA. The protein is Deoxyuridine 5'-triphosphate nucleotidohydrolase of Rhodopseudomonas palustris (strain ATCC BAA-98 / CGA009).